Here is a 303-residue protein sequence, read N- to C-terminus: N-acetyl-D-glucosamine kinase (303 aa).

ATP contacts are provided by residues 4–11 (GFDIGGTK) and 133–140 (GVGGGLIF). Positions 157, 177, 179, and 184 each coordinate Zn(2+).

Belongs to the ROK (NagC/XylR) family. NagK subfamily.

It carries out the reaction N-acetyl-D-glucosamine + ATP = N-acetyl-D-glucosamine 6-phosphate + ADP + H(+). The protein operates within cell wall biogenesis; peptidoglycan recycling. Catalyzes the phosphorylation of N-acetyl-D-glucosamine (GlcNAc) derived from cell-wall degradation, yielding GlcNAc-6-P. This Shigella boydii serotype 4 (strain Sb227) protein is N-acetyl-D-glucosamine kinase.